The chain runs to 176 residues: Shikimate kinase (176 aa).

Position 14–19 (Gly14–Thr19) interacts with ATP. A Mg(2+)-binding site is contributed by Ser18. Residues Asp36, Arg60, and Gly83 each coordinate substrate. Arg121 is an ATP binding site. Substrate is bound at residue Arg140.

This sequence belongs to the shikimate kinase family. As to quaternary structure, monomer. The cofactor is Mg(2+).

Its subcellular location is the cytoplasm. It carries out the reaction shikimate + ATP = 3-phosphoshikimate + ADP + H(+). It functions in the pathway metabolic intermediate biosynthesis; chorismate biosynthesis; chorismate from D-erythrose 4-phosphate and phosphoenolpyruvate: step 5/7. Its function is as follows. Catalyzes the specific phosphorylation of the 3-hydroxyl group of shikimic acid using ATP as a cosubstrate. The protein is Shikimate kinase of Francisella philomiragia subsp. philomiragia (strain ATCC 25017 / CCUG 19701 / FSC 153 / O#319-036).